The chain runs to 348 residues: GTP 3',8-cyclase (348 aa).

One can recognise a Radical SAM core domain in the interval 24-242 (PFGRAVTYLR…EKQFTLTDID (219 aa)). Arginine 33 serves as a coordination point for GTP. [4Fe-4S] cluster contacts are provided by cysteine 40 and cysteine 44. Residue tyrosine 46 participates in S-adenosyl-L-methionine binding. Cysteine 47 is a binding site for [4Fe-4S] cluster. Position 82 (arginine 82) interacts with GTP. Residue glycine 86 coordinates S-adenosyl-L-methionine. Threonine 115 is a binding site for GTP. Serine 139 is an S-adenosyl-L-methionine binding site. Lysine 175 lines the GTP pocket. S-adenosyl-L-methionine is bound at residue methionine 209. Residues cysteine 272 and cysteine 275 each coordinate [4Fe-4S] cluster. 277 to 279 (RVR) lines the GTP pocket. Residue cysteine 289 coordinates [4Fe-4S] cluster.

This sequence belongs to the radical SAM superfamily. MoaA family. In terms of assembly, monomer and homodimer. The cofactor is [4Fe-4S] cluster.

The catalysed reaction is GTP + AH2 + S-adenosyl-L-methionine = (8S)-3',8-cyclo-7,8-dihydroguanosine 5'-triphosphate + 5'-deoxyadenosine + L-methionine + A + H(+). Its pathway is cofactor biosynthesis; molybdopterin biosynthesis. Functionally, catalyzes the cyclization of GTP to (8S)-3',8-cyclo-7,8-dihydroguanosine 5'-triphosphate. The sequence is that of GTP 3',8-cyclase from Rhizobium etli (strain CIAT 652).